Reading from the N-terminus, the 53-residue chain is Ovomucoid (53 aa).

A Kazal-like domain is found at 3-53; it reads VDCSEYPQPTCTTEHRPVCGSNNETYGNKCNFCNAVVKSNGTLTVSHFGKC. Cystine bridges form between cysteine 5–cysteine 35, cysteine 13–cysteine 32, and cysteine 21–cysteine 53. The N-linked (GlcNAc...) asparagine glycan is linked to asparagine 42.

The protein localises to the secreted. The polypeptide is Ovomucoid (Polyplectron bicalcaratum (Grey peacock-pheasant)).